The following is a 131-amino-acid chain: Ribosome-binding factor A (131 aa).

The protein belongs to the RbfA family. In terms of assembly, monomer. Binds 30S ribosomal subunits, but not 50S ribosomal subunits or 70S ribosomes.

It localises to the cytoplasm. In terms of biological role, one of several proteins that assist in the late maturation steps of the functional core of the 30S ribosomal subunit. Associates with free 30S ribosomal subunits (but not with 30S subunits that are part of 70S ribosomes or polysomes). Required for efficient processing of 16S rRNA. May interact with the 5'-terminal helix region of 16S rRNA. This Ruegeria sp. (strain TM1040) (Silicibacter sp.) protein is Ribosome-binding factor A.